Here is a 971-residue protein sequence, read N- to C-terminus: Exportin-2 (971 aa).

The Importin N-terminal domain maps to 29–102; that stretch reads AEKFLESVEG…KANIVNLMLS (74 aa).

Belongs to the XPO2/CSE1 family. Interacts with cftr.

It is found in the cytoplasm. It localises to the nucleus. In terms of biological role, export receptor for importin alpha. Mediates importin-alpha re-export from the nucleus to the cytoplasm after import substrates have been released into the nucleoplasm. Negatively regulates fluid secretion and plays a role in fluid homeostasis by down-regulating cftr activity. In Oreochromis niloticus (Nile tilapia), this protein is Exportin-2 (cse1l).